The sequence spans 365 residues: Flagellar P-ring protein (365 aa).

Residues 1–21 form the signal peptide; it reads MKSLRLVALFCCLLPLGMAHA.

The protein belongs to the FlgI family. The basal body constitutes a major portion of the flagellar organelle and consists of four rings (L,P,S, and M) mounted on a central rod.

It localises to the periplasm. The protein localises to the bacterial flagellum basal body. In terms of biological role, assembles around the rod to form the L-ring and probably protects the motor/basal body from shearing forces during rotation. This is Flagellar P-ring protein from Aeromonas hydrophila subsp. hydrophila (strain ATCC 7966 / DSM 30187 / BCRC 13018 / CCUG 14551 / JCM 1027 / KCTC 2358 / NCIMB 9240 / NCTC 8049).